A 254-amino-acid chain; its full sequence is Thiazole synthase (254 aa).

Catalysis depends on Lys95, which acts as the Schiff-base intermediate with DXP. Residues Gly156, Ala182 to Gly183, and Asn204 to Thr205 each bind 1-deoxy-D-xylulose 5-phosphate.

It belongs to the ThiG family. As to quaternary structure, homotetramer. Forms heterodimers with either ThiH or ThiS.

Its subcellular location is the cytoplasm. The enzyme catalyses [ThiS sulfur-carrier protein]-C-terminal-Gly-aminoethanethioate + 2-iminoacetate + 1-deoxy-D-xylulose 5-phosphate = [ThiS sulfur-carrier protein]-C-terminal Gly-Gly + 2-[(2R,5Z)-2-carboxy-4-methylthiazol-5(2H)-ylidene]ethyl phosphate + 2 H2O + H(+). It functions in the pathway cofactor biosynthesis; thiamine diphosphate biosynthesis. Its function is as follows. Catalyzes the rearrangement of 1-deoxy-D-xylulose 5-phosphate (DXP) to produce the thiazole phosphate moiety of thiamine. Sulfur is provided by the thiocarboxylate moiety of the carrier protein ThiS. In vitro, sulfur can be provided by H(2)S. This chain is Thiazole synthase, found in Shewanella piezotolerans (strain WP3 / JCM 13877).